We begin with the raw amino-acid sequence, 250 residues long: MGQKTNPNGLRLGIIRTWDSQWCVNDKEIPALIKEDFLIRQLINNFSKRNSISQIEIQRLKEKTKNRITITIHTAKPGIIIGKDGETRNKIQAQLKKLTQKDINLNILEVKNPDKTAVLVAQNMAEQLENRMKFRRVQKMAIQKAFKAGAKGIKVLISGRLNGDEIARSERHDEGRVPLHTLRADIDYAALEAHTTYGVLGIKVWIFHGEVLPGQTILDTRKPFVSQNKFIKRPRYFKGGKNNHVDAKEN.

The KH type-2 domain maps to 39–111 (IRQLINNFSK…DINLNILEVK (73 aa)).

The protein belongs to the universal ribosomal protein uS3 family. In terms of assembly, part of the 30S ribosomal subunit. Forms a tight complex with proteins S10 and S14.

Binds the lower part of the 30S subunit head. Binds mRNA in the 70S ribosome, positioning it for translation. This is Small ribosomal subunit protein uS3 from Phytoplasma australiense.